A 347-amino-acid polypeptide reads, in one-letter code: Probable zinc transporter 8 (347 aa).

A signal peptide spans Met1–Ser27. Over Thr28–Lys51 the chain is Extracellular. The helical transmembrane segment at Ile52 to Ser72 threads the bilayer. Over Arg73 to Lys83 the chain is Cytoplasmic. The chain crosses the membrane as a helical span at residues Ile84–Val104. The Extracellular segment spans residues Leu105 to Lys124. A helical transmembrane segment spans residues Phe125–Ile145. The Cytoplasmic segment spans residues Ala146–Arg192. Residues Val193–Leu213 form a helical membrane-spanning segment. Topologically, residues Gly214 to Gly224 are extracellular. Residues Leu225 to Leu245 traverse the membrane as a helical segment. Topologically, residues Gln246–Lys254 are cytoplasmic. The chain crosses the membrane as a helical span at residues Phe255 to Leu275. At Ser276–Ala286 the chain is on the extracellular side. The helical transmembrane segment at Leu287–Val307 threads the bilayer. The Cytoplasmic portion of the chain corresponds to Asp308–Gln326. A helical transmembrane segment spans residues Leu327 to Ala347.

It belongs to the ZIP transporter (TC 2.A.5) family.

Its subcellular location is the cell membrane. Functionally, probably mediates zinc uptake from the rhizosphere. The sequence is that of Probable zinc transporter 8 (ZIP8) from Arabidopsis thaliana (Mouse-ear cress).